Here is a 269-residue protein sequence, read N- to C-terminus: Tryptophan synthase alpha chain (269 aa).

Catalysis depends on proton acceptor residues Glu-49 and Asp-60.

It belongs to the TrpA family. In terms of assembly, tetramer of two alpha and two beta chains.

The catalysed reaction is (1S,2R)-1-C-(indol-3-yl)glycerol 3-phosphate + L-serine = D-glyceraldehyde 3-phosphate + L-tryptophan + H2O. Its pathway is amino-acid biosynthesis; L-tryptophan biosynthesis; L-tryptophan from chorismate: step 5/5. Its function is as follows. The alpha subunit is responsible for the aldol cleavage of indoleglycerol phosphate to indole and glyceraldehyde 3-phosphate. The chain is Tryptophan synthase alpha chain from Actinobacillus pleuropneumoniae serotype 3 (strain JL03).